Consider the following 234-residue polypeptide: uncharacterized protein (234 aa).

6 helical membrane passes run 5-23, 38-60, 73-92, 127-149, 170-192, and 197-217; these read LFYI…LWSF, IPTA…GFWV, AHIQ…AHGW, AITL…YIWL, GVAI…TVIS, and TQAG…ALAF.

It is found in the cell membrane. This is an uncharacterized protein from Archaeoglobus fulgidus (strain ATCC 49558 / DSM 4304 / JCM 9628 / NBRC 100126 / VC-16).